We begin with the raw amino-acid sequence, 455 residues long: MNNTLTTIILAAGKGTRMQSAKPKVLQILADKPLLAHVLDTCQSISVDKTIVVYGFGGDQVQQAMTDYSLTWVEQTEQLGTGHAVKVALDELPSTGKSLILYGDVPLVSAETLSRLKQANVQGMSMLTLTVDNPFGLGRIKRDEQGNITAIVEQKDASEQEQAIREINSGIYCVDNALLHQYLPNLSNDNAQQEYYLTDIVKMAVADGIAIAAIEPDYEFEIEGVNNRQQLAQLERKWQAKLVEDLQVQGVQFADPNRVDIRGEVSVGQDVFVDINVVFKGKVSLGNNVTIEAGCMIKDSQIGDNVHIKPYCVFDDAQVAQGATIGPFAHLRPQTVLEKNTRLGNFVEIKKSRIGEGSKVNHLSYVGDAQIGAGVNFGAGAITCNYDGVNKHQTIVGDNAFIGTNTSLVAPVTIGQTATIGAGSVITKNVEDNALAIGRGRQVQKDNYQRPEKKK.

The interval 1–228 is pyrophosphorylase; that stretch reads MNNTLTTIIL…EFEIEGVNNR (228 aa). UDP-N-acetyl-alpha-D-glucosamine is bound by residues 10-13, Lys24, Gln75, 80-81, 102-104, Gly138, Glu153, Asn168, and Asn226; these read LAAG, GT, and YGD. Residue Asp104 participates in Mg(2+) binding. Residue Asn226 participates in Mg(2+) binding. Positions 229–249 are linker; that stretch reads QQLAQLERKWQAKLVEDLQVQ. The tract at residues 250 to 455 is N-acetyltransferase; that stretch reads GVQFADPNRV…DNYQRPEKKK (206 aa). 2 residues coordinate UDP-N-acetyl-alpha-D-glucosamine: Arg332 and Lys350. Catalysis depends on His362, which acts as the Proton acceptor. Residues Tyr365 and Asn376 each coordinate UDP-N-acetyl-alpha-D-glucosamine. Acetyl-CoA contacts are provided by residues Ala379, 385–386, Ala422, and Arg439; that span reads NY.

In the N-terminal section; belongs to the N-acetylglucosamine-1-phosphate uridyltransferase family. This sequence in the C-terminal section; belongs to the transferase hexapeptide repeat family. Homotrimer. It depends on Mg(2+) as a cofactor.

It localises to the cytoplasm. It carries out the reaction alpha-D-glucosamine 1-phosphate + acetyl-CoA = N-acetyl-alpha-D-glucosamine 1-phosphate + CoA + H(+). The enzyme catalyses N-acetyl-alpha-D-glucosamine 1-phosphate + UTP + H(+) = UDP-N-acetyl-alpha-D-glucosamine + diphosphate. It participates in nucleotide-sugar biosynthesis; UDP-N-acetyl-alpha-D-glucosamine biosynthesis; N-acetyl-alpha-D-glucosamine 1-phosphate from alpha-D-glucosamine 6-phosphate (route II): step 2/2. The protein operates within nucleotide-sugar biosynthesis; UDP-N-acetyl-alpha-D-glucosamine biosynthesis; UDP-N-acetyl-alpha-D-glucosamine from N-acetyl-alpha-D-glucosamine 1-phosphate: step 1/1. It functions in the pathway bacterial outer membrane biogenesis; LPS lipid A biosynthesis. In terms of biological role, catalyzes the last two sequential reactions in the de novo biosynthetic pathway for UDP-N-acetylglucosamine (UDP-GlcNAc). The C-terminal domain catalyzes the transfer of acetyl group from acetyl coenzyme A to glucosamine-1-phosphate (GlcN-1-P) to produce N-acetylglucosamine-1-phosphate (GlcNAc-1-P), which is converted into UDP-GlcNAc by the transfer of uridine 5-monophosphate (from uridine 5-triphosphate), a reaction catalyzed by the N-terminal domain. This chain is Bifunctional protein GlmU, found in Psychrobacter sp. (strain PRwf-1).